A 556-amino-acid chain; its full sequence is Transcription factor IIIB 70 kDa subunit (556 aa).

A TFIIB-type zinc finger spans residues 8 to 41 (SSRKCKNCGSTDFVRDISNTTNELICKVCGLVTE). Residues Cys-12, Cys-15, Cys-33, and Cys-36 each coordinate Zn(2+). Tandem repeats lie at residues 98–174 (LKAV…TFLK) and 193–272 (IQHF…RLNE). The tract at residues 98 to 272 (LKAVSYALNI…EETLQQRLNE (175 aa)) is interaction with TBP and with the Pol III subunit C34. The interaction with TBP stretch occupies residues 284-556 (KEFRDDETEV…DAINGLFGQK (273 aa)). Disordered stretches follow at residues 287–309 (RDDE…SFDK) and 477–501 (ADLA…QSSA). Residues 295–309 (EGERSAESKPPSFDK) are compositionally biased toward basic and acidic residues. Over residues 486–495 (LRKKRSKRTN) the composition is skewed to basic residues.

The protein belongs to the TFIIB family. As to quaternary structure, TFIIIB comprises the TATA-binding protein (TBP), the B-related factor (BRF) and a 70 kDa polypeptide.

It is found in the nucleus. In terms of biological role, general activator of RNA polymerase III transcription. Interacts with TBP. Binds to Pol III subunit C34 and to the TAU135 component of TFIIIC. This is Transcription factor IIIB 70 kDa subunit (TDS4) from Kluyveromyces lactis (strain ATCC 8585 / CBS 2359 / DSM 70799 / NBRC 1267 / NRRL Y-1140 / WM37) (Yeast).